We begin with the raw amino-acid sequence, 251 residues long: Triosephosphate isomerase (251 aa).

9–11 (NWK) lines the substrate pocket. The active-site Electrophile is histidine 95. The active-site Proton acceptor is the glutamate 167. Substrate contacts are provided by residues glycine 173, serine 212, and 233-234 (GG).

This sequence belongs to the triosephosphate isomerase family. As to quaternary structure, homodimer.

Its subcellular location is the cytoplasm. The enzyme catalyses D-glyceraldehyde 3-phosphate = dihydroxyacetone phosphate. It functions in the pathway carbohydrate biosynthesis; gluconeogenesis. It participates in carbohydrate degradation; glycolysis; D-glyceraldehyde 3-phosphate from glycerone phosphate: step 1/1. Functionally, involved in the gluconeogenesis. Catalyzes stereospecifically the conversion of dihydroxyacetone phosphate (DHAP) to D-glyceraldehyde-3-phosphate (G3P). The polypeptide is Triosephosphate isomerase (Pseudomonas entomophila (strain L48)).